The chain runs to 282 residues: Pantothenate synthetase (282 aa).

Residue 30–37 coordinates ATP; the sequence is MGYLHEGH. His-37 serves as the catalytic Proton donor. A (R)-pantoate-binding site is contributed by Gln-61. Position 61 (Gln-61) interacts with beta-alanine. Residue 147–150 coordinates ATP; the sequence is GMKD. Residue Gln-153 participates in (R)-pantoate binding. ATP-binding positions include Val-176 and 184–187; that span reads KSSR.

Belongs to the pantothenate synthetase family. Homodimer.

Its subcellular location is the cytoplasm. The catalysed reaction is (R)-pantoate + beta-alanine + ATP = (R)-pantothenate + AMP + diphosphate + H(+). It participates in cofactor biosynthesis; (R)-pantothenate biosynthesis; (R)-pantothenate from (R)-pantoate and beta-alanine: step 1/1. Catalyzes the condensation of pantoate with beta-alanine in an ATP-dependent reaction via a pantoyl-adenylate intermediate. The protein is Pantothenate synthetase of Bacillus cereus (strain ATCC 10987 / NRS 248).